The following is a 135-amino-acid chain: MACGLVASNLNLKPGECLKVRGEVAPDAKSFVLNLGKDSNNLCLHFNPRFNAHGDANTIVCNSKDNGAWGTEHREPAFPFQPGSTVEVCITFDQADLTIKLPDGHEFKFPNRLNMEAINYMAADGDFKIKCVAFE.

Alanine 2 carries the post-translational modification N-acetylalanine. One can recognise a Galectin domain in the interval 4–135 (GLVASNLNLK…DFKIKCVAFE (132 aa)). 3 positions are modified to N6-acetyllysine: lysine 13, lysine 19, and lysine 29. The residue at position 30 (serine 30) is a Phosphoserine. Residues 45–49 (HFNPR), histidine 53, asparagine 62, and 69–72 (WGTE) each bind a beta-D-galactoside. N6-acetyllysine; alternate is present on lysine 108. Lysine 108 is subject to N6-succinyllysine; alternate. Lysine 128 is modified (N6-acetyllysine).

As to quaternary structure, binds LGALS3BP. Interacts with CD2, CD3, CD4, CD6, CD7, CD43, ALCAM and CD45. Interacts with laminin. Interacts with SUSD2. Exists in a reversible and active monomer-homodimer equilibrium, the mononomer/dimer state is regulated by lectin concentration. Interacts with cargo receptor TMED10; the interaction mediates the translocation from the cytoplasm into the ERGIC (endoplasmic reticulum-Golgi intermediate compartment) and thereby secretion.

The protein resides in the cytoplasm. It localises to the secreted. Its subcellular location is the extracellular space. The protein localises to the extracellular matrix. Functionally, lectin that binds beta-galactoside and a wide array of complex carbohydrates. Plays a role in regulating apoptosis, cell proliferation and cell differentiation. Inhibits CD45 protein phosphatase activity and therefore the dephosphorylation of Lyn kinase. Strong inducer of T-cell apoptosis. The sequence is that of Galectin-1 (LGALS1) from Cricetulus griseus (Chinese hamster).